A 168-amino-acid chain; its full sequence is Chorismate pyruvate-lyase (168 aa).

M36, R78, L116, and E157 together coordinate substrate.

This sequence belongs to the UbiC family. As to quaternary structure, monomer.

The protein resides in the cytoplasm. It carries out the reaction chorismate = 4-hydroxybenzoate + pyruvate. The protein operates within cofactor biosynthesis; ubiquinone biosynthesis. In terms of biological role, removes the pyruvyl group from chorismate, with concomitant aromatization of the ring, to provide 4-hydroxybenzoate (4HB) for the ubiquinone pathway. The chain is Chorismate pyruvate-lyase from Photorhabdus laumondii subsp. laumondii (strain DSM 15139 / CIP 105565 / TT01) (Photorhabdus luminescens subsp. laumondii).